The primary structure comprises 565 residues: 2-isopropylmalate synthase (565 aa).

Positions 37–312 (PRWCSVDLRD…DPMIDLSDID (276 aa)) constitute a Pyruvate carboxyltransferase domain. 4 residues coordinate Mg(2+): aspartate 46, histidine 251, histidine 253, and asparagine 287. The interval 446–565 (EGGDPAASLE…SAVNRASRES (120 aa)) is regulatory domain.

This sequence belongs to the alpha-IPM synthase/homocitrate synthase family. LeuA type 2 subfamily. Homodimer. Requires Mg(2+) as cofactor.

It localises to the cytoplasm. The enzyme catalyses 3-methyl-2-oxobutanoate + acetyl-CoA + H2O = (2S)-2-isopropylmalate + CoA + H(+). The protein operates within amino-acid biosynthesis; L-leucine biosynthesis; L-leucine from 3-methyl-2-oxobutanoate: step 1/4. Functionally, catalyzes the condensation of the acetyl group of acetyl-CoA with 3-methyl-2-oxobutanoate (2-ketoisovalerate) to form 3-carboxy-3-hydroxy-4-methylpentanoate (2-isopropylmalate). The polypeptide is 2-isopropylmalate synthase (Parafrankia sp. (strain EAN1pec)).